Reading from the N-terminus, the 31-residue chain is Cytochrome b6-f complex subunit 6 (31 aa).

Residues 4-24 (LLSYFAFLMLALTFTLALFVG) form a helical membrane-spanning segment.

It belongs to the PetL family. In terms of assembly, the 4 large subunits of the cytochrome b6-f complex are cytochrome b6, subunit IV (17 kDa polypeptide, PetD), cytochrome f and the Rieske protein, while the 4 small subunits are PetG, PetL, PetM and PetN. The complex functions as a dimer.

Its subcellular location is the plastid. It localises to the chloroplast thylakoid membrane. Its function is as follows. Component of the cytochrome b6-f complex, which mediates electron transfer between photosystem II (PSII) and photosystem I (PSI), cyclic electron flow around PSI, and state transitions. PetL is important for photoautotrophic growth as well as for electron transfer efficiency and stability of the cytochrome b6-f complex. This chain is Cytochrome b6-f complex subunit 6, found in Adiantum capillus-veneris (Maidenhair fern).